We begin with the raw amino-acid sequence, 1013 residues long: MGDGSDAERSGGTSSSSALELLAQYEQHIMERGRTLEAIEGHGGERLGPTYEELVEENVQLRRELQGQREEIEHLRKTISLLASGRSGATVVEQQVRPEPSPSVRELALPPRSADRRKNTKNLSLAPVGHEVPSTDRLRVSPQEATSGAQQVPLLTSSKSAEILVSKSPDEDRHLMSPRKTISRSSSSYSNTLGSPATSVLYKNSRISITSPCKSNSTSKAASVLSLPENNTSTENAPHSPHRIDNELDLLTVEPQDGSRYDTERAGGPGPLSPESIVYSDSDLQEHQPSDLSSTTRTDLGKFRDMVDTTFNAEDNPTGSRDKETGTEMEIATLQNTPSRQHESSLVTSPQASRSSITTPVVDPTNTSEPSSLSAAKFGSMSTATSSNKRSKGMGTPSVEHSAKSYSQHSGSPHSNSHQSKKADIPLFVQPEELGTIRIEVISTLYHEPGNAASILFSVVDKKSSKEMFKFAKTFTRIAEFDTFIRNNMESLAVPPLPDKHMFASNVPVKVDSRREKLNDYFASLLYLSPLPFNPALKLAQFISTDPVMNPITGEFAKEGMLLVRKSKTLGSTTTWRIRYCTVEGSIMHLHDHMIDTDTIKLTHSTIELQANLPDDKYGTKNGFILNEHKKSGLSSSTKYYFCAETPKEREQWISVLTTLCDGPGGTAAIPSINSKSEASSLFEQTSISDSSYLGPIANLEAMDATSPTRPNDPNPVSLTSEEEKEVKRRRMKSFFPFKKLATTPTPYAAGNDNASIFSQDDDSPVNATNESGISRSLQSMNLQAQYNAVFGADLRSCLQLSSHPYQGKYEIPSVVFRTLEFLYKNRGIQEEGIFRLSGSSSLIKSLQEQFDKEYDVDLCNYNDKVSVTPGNENQGGLYVDVNTVSGLLKLYLRKLPHMIFGDAAYMDFKRIVERNGDDSKLIALEFRALVNSGRIAKEYVALMYALFELLVKITENSKYNKMNLRNLCIVFSPTLNIPVNILHPFITDFGCIFQDKAPMENGPPVNIHIPQI.

4 disordered regions span residues 90 to 197 (TVVE…GSPA), 258 to 277 (GSRYDTERAGGPGPLSPESI), 282 to 301 (SDLQEHQPSDLSSTTRTDLG), and 307 to 421 (VDTT…HQSK). A compositionally biased stretch (polar residues) spans 143-160 (QEATSGAQQVPLLTSSKS). Polar residues-rich tracts occupy residues 309–319 (TTFNAEDNPTG), 333–388 (TLQN…TSSN), and 404–418 (KSYSQHSGSPHSNSH). One can recognise a PH domain in the interval 555–662 (EFAKEGMLLV…WISVLTTLCD (108 aa)). The interval 702 to 726 (AMDATSPTRPNDPNPVSLTSEEEKE) is disordered. Residues 706–720 (TSPTRPNDPNPVSLT) are compositionally biased toward polar residues. Residues 799–1013 (LQLSSHPYQG…PPVNIHIPQI (215 aa)) form the Rho-GAP domain.

It localises to the cytoplasm. In terms of biological role, GTPase-activating protein (GAP) for CDC42 and less efficiently for RHO1. Negative regulator of the pheromone-response pathway through the STE20 protein kinase. This chain is GTPase-activating protein BEM3 (BEM3), found in Eremothecium gossypii (strain ATCC 10895 / CBS 109.51 / FGSC 9923 / NRRL Y-1056) (Yeast).